The primary structure comprises 134 residues: Transcription antitermination protein NusB (134 aa).

Belongs to the NusB family.

Involved in transcription antitermination. Required for transcription of ribosomal RNA (rRNA) genes. Binds specifically to the boxA antiterminator sequence of the ribosomal RNA (rrn) operons. This is Transcription antitermination protein NusB from Shewanella baltica (strain OS223).